A 93-amino-acid chain; its full sequence is Beta-defensin 128 (93 aa).

The N-terminal stretch at 1-18 (MKLFLVLIILLFEVLTDG) is a signal peptide. 3 cysteine pairs are disulfide-bonded: C24-C52, C32-C46, and C36-C53.

Belongs to the beta-defensin family.

The protein resides in the secreted. Has antibacterial activity. The polypeptide is Beta-defensin 128 (DEFB128) (Macaca fascicularis (Crab-eating macaque)).